The chain runs to 113 residues: MAKTSTSPVAPTRLWVKAAFTGFRRSKHTQNSNQALLKLQNVNTKEDVAFYQGKRVVYIYKGQKKNGSNYRTIWGRIGKAHGNNGVAVARFAHNLPPQAIGSVLRVMLYPNRA.

Belongs to the eukaryotic ribosomal protein eL33 family.

This Tetrahymena thermophila (strain SB210) protein is Large ribosomal subunit protein eL33 (RPL35A).